We begin with the raw amino-acid sequence, 230 residues long: Ureidoacrylate amidohydrolase RutB (230 aa).

Catalysis depends on aspartate 23, which acts as the Proton acceptor. The active site involves lysine 132. The Nucleophile role is filled by cysteine 165.

Belongs to the isochorismatase family. RutB subfamily.

It catalyses the reaction (Z)-3-ureidoacrylate + H2O + H(+) = (Z)-3-aminoacrylate + NH4(+) + CO2. The catalysed reaction is (Z)-3-ureidoacrylate + H2O = (Z)-3-aminoacrylate + carbamate + H(+). It carries out the reaction (Z)-2-methylureidoacrylate + H2O + H(+) = (Z)-2-methylaminoacrylate + NH4(+) + CO2. In terms of biological role, hydrolyzes ureidoacrylate to form aminoacrylate and carbamate. The carbamate hydrolyzes spontaneously, thereby releasing one of the nitrogen atoms of the pyrimidine ring as ammonia and one of its carbon atoms as CO2. The protein is Ureidoacrylate amidohydrolase RutB of Yersinia enterocolitica serotype O:8 / biotype 1B (strain NCTC 13174 / 8081).